The following is a 90-amino-acid chain: UPF0213 protein lwe0147 (90 aa).

The 79-residue stretch at 5–83 (NEHFFYVLKC…SRKNKDSYLI (79 aa)) folds into the GIY-YIG domain.

Belongs to the UPF0213 family.

The sequence is that of UPF0213 protein lwe0147 from Listeria welshimeri serovar 6b (strain ATCC 35897 / DSM 20650 / CCUG 15529 / CIP 8149 / NCTC 11857 / SLCC 5334 / V8).